A 251-amino-acid chain; its full sequence is Adenosylcobinamide-GDP ribazoletransferase (251 aa).

Helical transmembrane passes span 36–56 (LYPFIGLIIGALWYLSFFVLS), 60–80 (VPIMLMAALILTVPYILTGFL), 110–130 (VGAFSVISVVLLLLVEFAGMF), 141–161 (VLIFIPIASRAINGYFIVSQE), 181–201 (EIILLGIYVLVALITFFTLGI), 202–222 (NYLIAILAMGLISFILLLKVK), and 231–251 (DVAGYILVLMEFTGILLLGII).

It belongs to the CobS family. Mg(2+) is required as a cofactor.

Its subcellular location is the cell membrane. It catalyses the reaction alpha-ribazole + adenosylcob(III)inamide-GDP = adenosylcob(III)alamin + GMP + H(+). It carries out the reaction alpha-ribazole 5'-phosphate + adenosylcob(III)inamide-GDP = adenosylcob(III)alamin 5'-phosphate + GMP + H(+). Its pathway is cofactor biosynthesis; adenosylcobalamin biosynthesis; adenosylcobalamin from cob(II)yrinate a,c-diamide: step 7/7. Functionally, joins adenosylcobinamide-GDP and alpha-ribazole to generate adenosylcobalamin (Ado-cobalamin). Also synthesizes adenosylcobalamin 5'-phosphate from adenosylcobinamide-GDP and alpha-ribazole 5'-phosphate. This is Adenosylcobinamide-GDP ribazoletransferase from Clostridium perfringens (strain 13 / Type A).